We begin with the raw amino-acid sequence, 250 residues long: Cobalt transport protein CbiM (250 aa).

Residues 1–27 (MKKPLFFIASACVTIYILFALSPSVYA) form the signal peptide. A run of 6 helical transmembrane segments spans residues 33 to 53 (GFLP…FFLV), 70 to 90 (LLLA…IPSV), 102 to 122 (LGAL…VLLF), 134 to 154 (TLGA…YVLF), 168 to 188 (VFLA…IQLA), and 208 to 228 (IFAV…VVVW).

This sequence belongs to the CbiM family. Forms an energy-coupling factor (ECF) transporter complex composed of an ATP-binding protein (A component, CbiO), a transmembrane protein (T component, CbiQ) and 2 possible substrate-capture proteins (S components, CbiM and CbiN) of unknown stoichimetry.

It is found in the cell membrane. Its pathway is cofactor biosynthesis; adenosylcobalamin biosynthesis. In terms of biological role, part of the energy-coupling factor (ECF) transporter complex CbiMNOQ involved in cobalt import. This is Cobalt transport protein CbiM from Anoxybacillus flavithermus (strain DSM 21510 / WK1).